Reading from the N-terminus, the 267-residue chain is Exosome complex component Rrp42 (267 aa).

The protein belongs to the RNase PH family. Rrp42 subfamily. As to quaternary structure, component of the archaeal exosome complex. Forms a hexameric ring-like arrangement composed of 3 Rrp41-Rrp42 heterodimers. The hexameric ring associates with a trimer of Rrp4 and/or Csl4 subunits.

Its subcellular location is the cytoplasm. Its function is as follows. Non-catalytic component of the exosome, which is a complex involved in RNA degradation. Contributes to the structuring of the Rrp41 active site. This is Exosome complex component Rrp42 from Methanopyrus kandleri (strain AV19 / DSM 6324 / JCM 9639 / NBRC 100938).